Consider the following 128-residue polypeptide: Large ribosomal subunit protein uL18 (128 aa).

It belongs to the universal ribosomal protein uL18 family. Part of the 50S ribosomal subunit; part of the 5S rRNA/L5/L18/L25 subcomplex. Contacts the 5S and 23S rRNAs.

Functionally, this is one of the proteins that bind and probably mediate the attachment of the 5S RNA into the large ribosomal subunit, where it forms part of the central protuberance. The sequence is that of Large ribosomal subunit protein uL18 from Acidothermus cellulolyticus (strain ATCC 43068 / DSM 8971 / 11B).